The following is a 236-amino-acid chain: 3-oxoacyl-[acyl-carrier-protein] reductase (236 aa).

At methionine 1 the chain carries N-acetylmethionine. Residues 11 to 14 (SRGI) and 34 to 35 (RN) contribute to the NADP(+) site. Lysine 40 carries the post-translational modification N6-acetyllysine. 83–85 (AAG) is an NADP(+) binding site. Lysine 96 carries the post-translational modification N6-acetyllysine. Residue serine 134 participates in substrate binding. NADP(+) contacts are provided by residues tyrosine 147, lysine 151, and 180-182 (IHT). Tyrosine 147 acts as the Proton acceptor in catalysis. N6-acetyllysine is present on lysine 194.

This sequence belongs to the short-chain dehydrogenases/reductases (SDR) family. As to quaternary structure, homotetramer (in vitro). Heterotetramer with HSD17B8; contains two molecules each of HSD17B8 and CBR4. Does not form homotetramers when HSD17B8 is coexpressed, only heterotetramers (in vitro).

It localises to the mitochondrion matrix. It catalyses the reaction a (3R)-hydroxyacyl-[ACP] + NADP(+) = a 3-oxoacyl-[ACP] + NADPH + H(+). The catalysed reaction is a quinone + NADPH + H(+) = a quinol + NADP(+). It participates in lipid metabolism; fatty acid biosynthesis. Component of the heterotetramer complex KAR (3-ketoacyl-[acyl carrier protein] reductase or 3-ketoacyl-[ACP] reductase) that forms part of the mitochondrial fatty acid synthase (mtFAS). Beta-subunit of the KAR heterotetramer complex, responsible for the 3-ketoacyl-ACP reductase activity of the mtFAS, reduces 3-oxoacyl-[ACP] to (3R)-hydroxyacyl-[ACP] in a NADPH-dependent manner with no chain length preference, thereby participating in mitochondrial fatty acid biosynthesis. The homotetramer has NADPH-dependent quinone reductase activity (in vitro), hence could play a role in protection against cytotoxicity of exogenous quinones. As a heterotetramer, it can also reduce 9,10-phenanthrenequinone, 1,4-benzoquinone and various other o-quinones and p-quinones (in vitro). The sequence is that of 3-oxoacyl-[acyl-carrier-protein] reductase (Cbr4) from Rattus norvegicus (Rat).